The sequence spans 297 residues: Alarmin release inhibitor (297 aa).

N-linked (GlcNAc...) asparagine glycosylation is found at Asn-107, Asn-175, and Asn-190. A Sushi domain is found at 151 to 211; sequence TYDPTPNTPT…WVPTLGVCPK (61 aa). Residues Cys-183 and Cys-209 are joined by a disulfide bond.

In terms of assembly, interacts with mouse IL33 (in reduced form).

It is found in the secreted. The protein resides in the host nucleus. Its function is as follows. Secreted protein which suppresses the host allergic response by inhibiting the interaction of host IL33 with its receptor in order to maintain parasitic infection. Binds to both host IL33 and host nuclear DNA and this dual binding blocks the interaction of IL33 with its receptor, and tethers IL33 within necrotic cells, preventing its release, and blocking allergic response initiation. In Heligmosomoides polygyrus (Parasitic roundworm), this protein is Alarmin release inhibitor.